The following is a 572-amino-acid chain: Putative inorganic phosphate transporter C8E4.01c (572 aa).

Residues 1-47 (MAFGSKILNIGSKSDEYNDDAVPLDQVEEGAQERRYYLGLTKREFKL) are Cytoplasmic-facing. Phosphoserine is present on residues serine 12 and serine 14. Residues 48 to 68 (MMLAGVGFFLDSYDLFIINLV) form a helical membrane-spanning segment. Residues 69-99 (TPIFEYLYWGGIEKGPTGKGHYPSGIRGLVN) lie on the Extracellular side of the membrane. A helical transmembrane segment spans residues 100–120 (ASANIGNIFGQLLFGFMGDFF). Topologically, residues 121–123 (GRK) are cytoplasmic. A helical membrane pass occupies residues 124–144 (FVYGKEMVIVIIATVLVIAMP). Over 145–153 (KSIHSPLSK) the chain is Extracellular. A helical transmembrane segment spans residues 154–174 (MMWVFCWRWLLGVGIGGDYPM). Residues 175-193 (SAAITSERSKIKRRGTLIS) lie on the Cytoplasmic side of the membrane. Residues 194-214 (LIFAFQGFGTLAGAIVTIILL) traverse the membrane as a helical segment. Residues 215-229 (GCFEHPLNREGHYHK) are Extracellular-facing. A helical transmembrane segment spans residues 230 to 250 (LEGVWRLQFGLALVPAIGVLI). Over 251 to 346 (PRLIMKESKS…TYFRQWRHFK (96 aa)) the chain is Cytoplasmic. The tract at residues 265–297 (KALNSAEGKDPKAFFNTDDEDNMKKSSSHGDSE) is disordered. The segment covering 286-296 (NMKKSSSHGDS) has biased composition (basic and acidic residues). A phosphoserine mark is found at serine 292 and serine 296. The chain crosses the membrane as a helical span at residues 347–367 (HLLGTSVCWFLLDIAFYGVNL). Residues 368 to 395 (NQSVILKNIGFSTGTNEYRTLMKNAIGN) are Extracellular-facing. The chain crosses the membrane as a helical span at residues 396-416 (LIIAVAGYVPGYWFNVFLVEI). The Cytoplasmic portion of the chain corresponds to 417-420 (LGRK). A helical transmembrane segment spans residues 421-441 (WIQLQGFVITGLMFAILAGRW). Residues 442–449 (NEISTGGR) are Extracellular-facing. A helical membrane pass occupies residues 450–470 (FACFVIAQLFSNFGPNSTTFI). The Cytoplasmic portion of the chain corresponds to 471 to 485 (YPAEVFPARVRGTAH). The chain crosses the membrane as a helical span at residues 486 to 506 (GVSAALGKCGAILASLLFNFL). Over 507-508 (TG) the chain is Extracellular. A helical transmembrane segment spans residues 509 to 529 (VIGYGNVMWIFCGCMWGGILF). Residues 530 to 572 (TLLLPETKGRDADEIDRLELFYGKDGKVQCDSKWKSWYFNGIF) lie on the Cytoplasmic side of the membrane.

This sequence belongs to the major facilitator superfamily. Sugar transporter (TC 2.A.1.1) family.

The protein resides in the membrane. High-affinity transporter for external inorganic phosphate. The chain is Putative inorganic phosphate transporter C8E4.01c from Schizosaccharomyces pombe (strain 972 / ATCC 24843) (Fission yeast).